Here is a 172-residue protein sequence, read N- to C-terminus: Translationally-controlled tumor protein homolog (172 aa).

One can recognise a TCTP domain in the interval 1–172 (MIIYRDCISQ…FKDGLEMEKC (172 aa)).

It belongs to the TCTP family. As to expression, expressed by the venom gland.

The protein resides in the secreted. Venom protein that causes edema, enhances vascular permeability and is likely related to the inflammatory activity of the venom. This Crotalus adamanteus (Eastern diamondback rattlesnake) protein is Translationally-controlled tumor protein homolog.